Consider the following 261-residue polypeptide: Undecaprenyl-diphosphatase (261 aa).

Helical transmembrane passes span Arg-38–Phe-58, Arg-75–Val-95, Ile-106–Val-126, Val-136–Gly-156, Phe-181–Leu-201, Val-217–Ile-237, and Ser-241–Thr-261.

This sequence belongs to the UppP family.

It is found in the cell inner membrane. It catalyses the reaction di-trans,octa-cis-undecaprenyl diphosphate + H2O = di-trans,octa-cis-undecaprenyl phosphate + phosphate + H(+). In terms of biological role, catalyzes the dephosphorylation of undecaprenyl diphosphate (UPP). Confers resistance to bacitracin. In Xylella fastidiosa (strain Temecula1 / ATCC 700964), this protein is Undecaprenyl-diphosphatase.